The chain runs to 557 residues: Glucose-6-phosphate isomerase (557 aa).

The active-site Proton donor is the Glu359. Residues His390 and Lys518 contribute to the active site.

This sequence belongs to the GPI family.

It localises to the cytoplasm. It catalyses the reaction alpha-D-glucose 6-phosphate = beta-D-fructose 6-phosphate. It functions in the pathway carbohydrate biosynthesis; gluconeogenesis. It participates in carbohydrate degradation; glycolysis; D-glyceraldehyde 3-phosphate and glycerone phosphate from D-glucose: step 2/4. Its function is as follows. Catalyzes the reversible isomerization of glucose-6-phosphate to fructose-6-phosphate. This chain is Glucose-6-phosphate isomerase, found in Hahella chejuensis (strain KCTC 2396).